Consider the following 269-residue polypeptide: Protein NETWORKED 3A (269 aa).

One can recognise an NAB domain in the interval 6-87; sequence SKWWWIGNHN…ERYDLLRPSS (82 aa). The tract at residues 87-113 is disordered; that stretch reads SVHKHGSDSESHEKSSTCDESSWSEAC. Basic and acidic residues predominate over residues 91–103; sequence HGSDSESHEKSST. Residues 155–214 adopt a coiled-coil conformation; sequence NGNSEMMKIEIERLREENKVYSEMVREKDEEKREAIRQMSVAIQMLKEENSELKKRVTNT.

Belongs to the NET family.

The protein localises to the cytoplasm. It is found in the cytoskeleton. It localises to the nucleus membrane. Functionally, plant-specific actin binding protein. May be part of a membrane-cytoskeletal adapter complex. The polypeptide is Protein NETWORKED 3A (Arabidopsis thaliana (Mouse-ear cress)).